We begin with the raw amino-acid sequence, 355 residues long: Probable dual-specificity RNA methyltransferase RlmN (355 aa).

The active-site Proton acceptor is E92. The Radical SAM core domain occupies 98-330 (FHYGLSVCVT…TELGINCGVR (233 aa)). Residues C105 and C341 are joined by a disulfide bond. [4Fe-4S] cluster is bound by residues C112, C116, and C119. S-adenosyl-L-methionine contacts are provided by residues 164–165 (GE), S196, 219–221 (SLH), and N297. C341 functions as the S-methylcysteine intermediate in the catalytic mechanism.

This sequence belongs to the radical SAM superfamily. RlmN family. The cofactor is [4Fe-4S] cluster.

It is found in the cytoplasm. It carries out the reaction adenosine(2503) in 23S rRNA + 2 reduced [2Fe-2S]-[ferredoxin] + 2 S-adenosyl-L-methionine = 2-methyladenosine(2503) in 23S rRNA + 5'-deoxyadenosine + L-methionine + 2 oxidized [2Fe-2S]-[ferredoxin] + S-adenosyl-L-homocysteine. The enzyme catalyses adenosine(37) in tRNA + 2 reduced [2Fe-2S]-[ferredoxin] + 2 S-adenosyl-L-methionine = 2-methyladenosine(37) in tRNA + 5'-deoxyadenosine + L-methionine + 2 oxidized [2Fe-2S]-[ferredoxin] + S-adenosyl-L-homocysteine. Specifically methylates position 2 of adenine 2503 in 23S rRNA and position 2 of adenine 37 in tRNAs. In Oceanobacillus iheyensis (strain DSM 14371 / CIP 107618 / JCM 11309 / KCTC 3954 / HTE831), this protein is Probable dual-specificity RNA methyltransferase RlmN.